A 173-amino-acid polypeptide reads, in one-letter code: Rubredoxin-2 (173 aa).

Rubredoxin-like domains lie at alanine 2–isoleucine 53 and tyrosine 119–tyrosine 170. Fe cation contacts are provided by cysteine 6, cysteine 9, cysteine 39, cysteine 42, cysteine 124, cysteine 127, cysteine 157, and cysteine 160.

It belongs to the rubredoxin family. Fe(3+) is required as a cofactor.

The protein resides in the cytoplasm. The protein operates within hydrocarbon metabolism; alkane degradation. Involved in the hydrocarbon hydroxylating system, which transfers electrons from NADH to rubredoxin reductase and then through rubredoxin to alkane 1 monooxygenase. The sequence is that of Rubredoxin-2 (alkG) from Ectopseudomonas oleovorans (Pseudomonas oleovorans).